Reading from the N-terminus, the 223-residue chain is Ribose-5-phosphate isomerase A (223 aa).

Substrate-binding positions include 32-35, 83-86, and 96-99; these read TGST, DGAD, and KGGG. Residue glutamate 105 is the Proton acceptor of the active site. Lysine 123 is a substrate binding site.

The protein belongs to the ribose 5-phosphate isomerase family. Homodimer.

It carries out the reaction aldehydo-D-ribose 5-phosphate = D-ribulose 5-phosphate. It functions in the pathway carbohydrate degradation; pentose phosphate pathway; D-ribose 5-phosphate from D-ribulose 5-phosphate (non-oxidative stage): step 1/1. Functionally, catalyzes the reversible conversion of ribose-5-phosphate to ribulose 5-phosphate. This chain is Ribose-5-phosphate isomerase A, found in Acinetobacter baumannii (strain AYE).